The following is a 341-amino-acid chain: DNA repair protein XRCC3 (341 aa).

N-acetylmethionine is present on methionine 1. 107–114 provides a ligand contact to ATP; it reads GRSSAGKT.

It belongs to the RecA family. RAD51 subfamily. In terms of assembly, interacts with RAD51C and RAD51. Part of the CX3 complex consisting of RAD51C and XRCC3; the complex has a ring-like structure arranged into a flat disc around a central channel; CX3 can interact with RAD51 in vitro. Forms a complex with FANCD2, BRCA2 and phosphorylated FANCG. Interacts with SWSAP1 and ZSWIM7; involved in homologous recombination repair. Interacts directly with PALB2 which may serve as a scaffold for a HR complex containing PALB2, BRCA2, RAD51C, RAD51 and XRCC3.

The protein resides in the nucleus. It localises to the cytoplasm. It is found in the perinuclear region. Its subcellular location is the mitochondrion matrix. In terms of biological role, involved in the homologous recombination repair (HRR) pathway of double-stranded DNA, thought to repair chromosomal fragmentation, translocations and deletions. Part of the RAD21 paralog protein complex CX3 which acts in the BRCA1-BRCA2-dependent HR pathway. Upon DNA damage, CX3 acts downstream of RAD51 recruitment; the complex binds predominantly to the intersection of the four duplex arms of the Holliday junction (HJ) and to junctions of replication forks. Involved in HJ resolution and thus in processing HR intermediates late in the DNA repair process; the function may be linked to the CX3 complex and seems to involve GEN1 during mitotic cell cycle progression. Part of a PALB2-scaffolded HR complex containing BRCA2 and RAD51C and which is thought to play a role in DNA repair by HR. Plays a role in regulating mitochondrial DNA copy number under conditions of oxidative stress in the presence of RAD51 and RAD51C. This Bos taurus (Bovine) protein is DNA repair protein XRCC3 (XRCC3).